The primary structure comprises 328 residues: Gonadotropin-releasing hormone receptor (328 aa).

Over 1 to 38 the chain is Extracellular; that stretch reads MANSASPEQNQNHCSASNSSIPLTQANLPTLTLSGKIR. N18 carries an N-linked (GlcNAc...) asparagine glycan. The chain crosses the membrane as a helical span at residues 39-59; sequence VTVTFFLFLLSTTFNASFLLK. At 60-84 the chain is on the cytoplasmic side; that stretch reads LHKWTQKKENGKKLSKMKVLLKHLT. Residues 85–105 form a helical membrane-spanning segment; the sequence is LANLLETLIVMPLDGMWNITV. Residues 106-115 lie on the Extracellular side of the membrane; the sequence is QWYAGELLCK. Residues C114 and C196 are joined by a disulfide bond. The helical transmembrane segment at 116-136 threads the bilayer; the sequence is VLSYLKLFSMYAPAFMMVVIS. At 137 to 157 the chain is on the cytoplasmic side; it reads LDRSLAITRPLAVKSNSKLGR. Residues 158–178 traverse the membrane as a helical segment; that stretch reads SMIGLAWLLSSIFAGPQLYIF. Topologically, residues 179 to 208 are extracellular; sequence RMIHLADSSGQTEGFSQCVTHCSFPQWWHQ. Residues 209–229 form a helical membrane-spanning segment; that stretch reads AFYNFFTFSCLFIIPLLFMLI. The Cytoplasmic segment spans residues 230–271; the sequence is CNAKIIFTLTRVLHQDPHKLQLNQSKNNIPRARLRTLKMTVA. A helical transmembrane segment spans residues 272–292; that stretch reads FATSFTVCWTPYYVLGIWYWF. Topologically, residues 293–306 are extracellular; that stretch reads DPEMLNRVSDPVNH. A helical transmembrane segment spans residues 307 to 327; the sequence is FFFLFALLNPCFDPLIYGYFS. Position 328 (L328) is a topological domain, cytoplasmic.

This sequence belongs to the G-protein coupled receptor 1 family.

The protein resides in the cell membrane. Receptor for gonadotropin releasing hormone (GnRH) that mediates the action of GnRH to stimulate the secretion of the gonadotropic hormones luteinizing hormone (LH) and follicle-stimulating hormone (FSH). This receptor mediates its action by association with G-proteins that activate a phosphatidylinositol-calcium second messenger system. In Equus caballus (Horse), this protein is Gonadotropin-releasing hormone receptor (GNRHR).